Consider the following 70-residue polypeptide: Putative membrane protein insertion efficiency factor (70 aa).

It belongs to the UPF0161 family.

It localises to the cell inner membrane. Functionally, could be involved in insertion of integral membrane proteins into the membrane. The polypeptide is Putative membrane protein insertion efficiency factor (Sphingopyxis alaskensis (strain DSM 13593 / LMG 18877 / RB2256) (Sphingomonas alaskensis)).